A 484-amino-acid polypeptide reads, in one-letter code: Cobyric acid synthase (484 aa).

The region spanning 251 to 438 (ALKIAVPVLS…LHGLFGNDEY (188 aa)) is the GATase cobBQ-type domain. Cysteine 333 serves as the catalytic Nucleophile. Residue histidine 430 is part of the active site.

It belongs to the CobB/CobQ family. CobQ subfamily.

Its pathway is cofactor biosynthesis; adenosylcobalamin biosynthesis. Functionally, catalyzes amidations at positions B, D, E, and G on adenosylcobyrinic A,C-diamide. NH(2) groups are provided by glutamine, and one molecule of ATP is hydrogenolyzed for each amidation. In Allorhizobium ampelinum (strain ATCC BAA-846 / DSM 112012 / S4) (Agrobacterium vitis (strain S4)), this protein is Cobyric acid synthase.